The following is a 290-amino-acid chain: MFAFVEQRYPTLWPYIQLMRLDRPIGTLLLLWPTLWAVWIAGAGTPSLTVIVVFFLGVVIMRAAGCVINDFADRNFDGDVERTQGRPLATGALSAKQALALFGGLGLLAFGLVLFLNELTFWLSFGGLGLAVLYPFTKRFTFMPQLFLGAAFSWAIPMAFAAETGEVPEIAWLLYVANVLWTVAYDTEYAMCDREDDLKLGIKSTAILFGDADRLMIAILQALTLLALIMVGHRLGFSWPWYAGLVGMSLSFAFQHSLIRYRERWPSFHAFLNNHWAGACVFIGLYFQYF.

8 helical membrane-spanning segments follow: residues 40-60 (IAGA…GVVI), 99-119 (LALF…LNEL), 120-140 (TFWL…TKRF), 142-162 (FMPQ…AFAA), 165-185 (GEVP…TVAY), 215-235 (LMIA…GHRL), 239-259 (WPWY…HSLI), and 267-287 (SFHA…GLYF).

It belongs to the UbiA prenyltransferase family. Mg(2+) is required as a cofactor.

The protein resides in the cell inner membrane. It carries out the reaction all-trans-octaprenyl diphosphate + 4-hydroxybenzoate = 4-hydroxy-3-(all-trans-octaprenyl)benzoate + diphosphate. Its pathway is cofactor biosynthesis; ubiquinone biosynthesis. Catalyzes the prenylation of para-hydroxybenzoate (PHB) with an all-trans polyprenyl group. Mediates the second step in the final reaction sequence of ubiquinone-8 (UQ-8) biosynthesis, which is the condensation of the polyisoprenoid side chain with PHB, generating the first membrane-bound Q intermediate 3-octaprenyl-4-hydroxybenzoate. This chain is 4-hydroxybenzoate octaprenyltransferase, found in Alcanivorax borkumensis (strain ATCC 700651 / DSM 11573 / NCIMB 13689 / SK2).